A 614-amino-acid chain; its full sequence is MSNPDALPFLTEMTVADIISKQAKHGVSFNRRNARWYVHLLKEIIVNIDRELIPLLPKMRLDGSTYMKPFKKSGALQKWPQAYCDRVGLKREDIGGAFTCVEYVDFDPSKDARVKEALMDEGFLPPEFNVSKKPWNTFEIKKDMRKYGTYQAWYTAWMRGNAKQKQTAEMVDADIKKFLEKHFRFKTKNYMKAYVFGLGLNPNRRNPVTFDEIKKALATSNKWPTAPTNLEETLEEGLGGELGSVGSLLKRRVVAAHRLGLISGLIAKEREDGKLSAEANSCATPTFRFKHRIVVNIPSRGLFGHECRSLFESDYNSDSDHSRPFVITNVVPDGCYIRKGTNVIYEKGKPGKKDKPVGAYKYYIPAGKEVFLGYDGSGLELRMLAHYLIKECRDMLAEAIEENNPAKKALAERGLASAIMYRDILLEGDIHSHNQKLAGLPTRDNAKTFIYAFNYGAGDAKLGSIVGGGADEGSVMRARFLAENPCIAILIDRMTEKAAQGYLIGVDGRKITMRRDATGKVMVHKALNTLLQCAGAVVMKYAMMFLNKWIEKDKVRCAKVIDMHDEGQFSVNRNDVQKLKEHTELCVKKAGEYLNMECPLASDCQIGLNWMHTH.

The protein belongs to the DNA polymerase type-A family.

It carries out the reaction DNA(n) + a 2'-deoxyribonucleoside 5'-triphosphate = DNA(n+1) + diphosphate. Replicates viral genomic DNA. This polymerase possesses two enzymatic activities: DNA synthesis (polymerase) and an exonucleolytic activity that degrades single-stranded DNA in the 3'-5' direction. This chain is DNA-directed DNA polymerase, found in Escherichia coli (Escherichia coli phage phi32).